Consider the following 281-residue polypeptide: Diaminopimelate epimerase (281 aa).

Residues asparagine 13, glutamine 46, and asparagine 66 each contribute to the substrate site. The active-site Proton donor is the cysteine 75. Residues 76–77, asparagine 160, asparagine 193, and 211–212 contribute to the substrate site; these read GN and ER. Cysteine 220 serves as the catalytic Proton acceptor. 221 to 222 contacts substrate; it reads GT.

This sequence belongs to the diaminopimelate epimerase family. In terms of assembly, homodimer.

It localises to the cytoplasm. It catalyses the reaction (2S,6S)-2,6-diaminopimelate = meso-2,6-diaminopimelate. It participates in amino-acid biosynthesis; L-lysine biosynthesis via DAP pathway; DL-2,6-diaminopimelate from LL-2,6-diaminopimelate: step 1/1. Catalyzes the stereoinversion of LL-2,6-diaminopimelate (L,L-DAP) to meso-diaminopimelate (meso-DAP), a precursor of L-lysine and an essential component of the bacterial peptidoglycan. The polypeptide is Diaminopimelate epimerase (Acinetobacter baumannii (strain ATCC 17978 / DSM 105126 / CIP 53.77 / LMG 1025 / NCDC KC755 / 5377)).